A 637-amino-acid polypeptide reads, in one-letter code: Sterol 3-beta-glucosyltransferase UGT80A2 (637 aa).

2 disordered regions span residues methionine 1 to valine 29 and valine 66 to glutamine 112. The segment covering serine 13–serine 24 has biased composition (low complexity). The segment covering alanine 67–arginine 79 has biased composition (polar residues). Positions arginine 103–glutamine 112 are enriched in basic and acidic residues.

Belongs to the glycosyltransferase 28 family. As to expression, expressed in roots, cauline leaf epidermal cells, stomata, stamen, pollen and around the base of siliques.

It catalyses the reaction a sterol + UDP-alpha-D-glucose = a sterol 3-beta-D-glucoside + UDP + H(+). Functionally, involved in the biosynthesis of sterol glucosides. Catalyzes the synthesis of steryl glycosides (SGs) and acyl steryl glycosides (ASGs) which are the most abundant sterol derivatives in higher plants. Can act on several sterols like sitosterol, campesterol and stigmasterol. Both UGT80A2 and UGT80B1 are required for the normal production of SGs and ASGs in seeds. The chain is Sterol 3-beta-glucosyltransferase UGT80A2 (UGT80A2) from Arabidopsis thaliana (Mouse-ear cress).